We begin with the raw amino-acid sequence, 116 residues long: Putative pterin-4-alpha-carbinolamine dehydratase 1 (116 aa).

Belongs to the pterin-4-alpha-carbinolamine dehydratase family.

The catalysed reaction is (4aS,6R)-4a-hydroxy-L-erythro-5,6,7,8-tetrahydrobiopterin = (6R)-L-erythro-6,7-dihydrobiopterin + H2O. The sequence is that of Putative pterin-4-alpha-carbinolamine dehydratase 1 from Gloeobacter violaceus (strain ATCC 29082 / PCC 7421).